Reading from the N-terminus, the 226-residue chain is UPF0173 metal-dependent hydrolase CTN_1413 (226 aa).

It belongs to the UPF0173 family.

This chain is UPF0173 metal-dependent hydrolase CTN_1413, found in Thermotoga neapolitana (strain ATCC 49049 / DSM 4359 / NBRC 107923 / NS-E).